Here is a 209-residue protein sequence, read N- to C-terminus: Small ribosomal subunit protein uS3c (209 aa).

Residues 39–109 (IRSCIEKQLH…QIRINLIEIT (71 aa)) form the KH type-2 domain.

Belongs to the universal ribosomal protein uS3 family. In terms of assembly, part of the 30S ribosomal subunit.

It is found in the plastid. The protein localises to the chloroplast. The sequence is that of Small ribosomal subunit protein uS3c (rps3) from Gracilaria tenuistipitata (Red alga).